The primary structure comprises 272 residues: NAD kinase (272 aa).

Aspartate 62 serves as the catalytic Proton acceptor. NAD(+)-binding positions include 62 to 63 (DG), arginine 67, 129 to 130 (NE), arginine 140, lysine 157, aspartate 159, isoleucine 167, 170 to 175 (SSYSSS), alanine 194, and glutamine 229.

Belongs to the NAD kinase family. The cofactor is a divalent metal cation.

The protein localises to the cytoplasm. It carries out the reaction NAD(+) + ATP = ADP + NADP(+) + H(+). Functionally, involved in the regulation of the intracellular balance of NAD and NADP, and is a key enzyme in the biosynthesis of NADP. Catalyzes specifically the phosphorylation on 2'-hydroxyl of the adenosine moiety of NAD to yield NADP. The protein is NAD kinase of Thermoplasma acidophilum (strain ATCC 25905 / DSM 1728 / JCM 9062 / NBRC 15155 / AMRC-C165).